The sequence spans 379 residues: Origin of replication complex subunit 2 (379 aa).

Residues 1-25 are disordered; it reads MALRGGHAAAAAGVSSGSEDDDEEA. Residues 8-17 show a composition bias toward low complexity; the sequence is AAAAAGVSSG.

This sequence belongs to the ORC2 family. In terms of assembly, component of the origin recognition complex (ORC) composed of at least ORC1, ORC2, ORC3, ORC4, ORC5 and ORC6. ORC is regulated in a cell-cycle and development dependent manner. It is sequentially assembled at the exit from anaphase of mitosis and disassembled as cells enter S phase.

The protein resides in the nucleus. Its function is as follows. Essential protein. Component of the origin recognition complex (ORC) that binds origins of replication. DNA-binding is ATP-dependent, however specific DNA sequences that define origins of replication have not been identified so far. ORC is required to assemble the pre-replication complex necessary to initiate DNA replication. In Oryza sativa subsp. indica (Rice), this protein is Origin of replication complex subunit 2.